A 305-amino-acid chain; its full sequence is Protoheme IX farnesyltransferase 2 (305 aa).

Transmembrane regions (helical) follow at residues 31-51 (VVMLLLLTALVGMCLASETWI), 53-73 (WKILLAGLTGIGFLSSAAAVI), 103-123 (ALVFAGVLTVVGYLILELWVN), 125-145 (LTALLTLASLVGYAFIYTMYL), 152-172 (NIVIGGLAGAAPPLLGWTAVT), 179-199 (ALLLVLIIFIWTPPHFWALAI), 231-251 (VLLALISVLPYLIGMTGAIYL), and 277-297 (AMKTFKFSIIHLMVLFVVLLV).

Belongs to the UbiA prenyltransferase family. Protoheme IX farnesyltransferase subfamily.

It is found in the cell inner membrane. It carries out the reaction heme b + (2E,6E)-farnesyl diphosphate + H2O = Fe(II)-heme o + diphosphate. It participates in porphyrin-containing compound metabolism; heme O biosynthesis; heme O from protoheme: step 1/1. Converts heme B (protoheme IX) to heme O by substitution of the vinyl group on carbon 2 of heme B porphyrin ring with a hydroxyethyl farnesyl side group. The chain is Protoheme IX farnesyltransferase 2 from Pseudoalteromonas atlantica (strain T6c / ATCC BAA-1087).